The chain runs to 154 residues: MIYREMLKSKIHRAVVRQADLHYVGSITIDATLMAAAGLWPGEKVDVLDITNGARLSTYVIEGEADSGTIGINGAAAHLISPGDLVIIVGYALMAEEDARSYQPNVVFVNGDNQLVRMGTDPAEAYDGVGLVRGDTNSPQPSLSEQAGDPRRAQ.

The active-site Schiff-base intermediate with substrate; via pyruvic acid is the serine 26. Serine 26 is modified (pyruvic acid (Ser)). Threonine 58 provides a ligand contact to substrate. Catalysis depends on tyrosine 59, which acts as the Proton donor. Residue 74–76 (GAA) coordinates substrate. Positions 129–154 (VGLVRGDTNSPQPSLSEQAGDPRRAQ) are disordered. The span at 135 to 145 (DTNSPQPSLSE) shows a compositional bias: polar residues.

This sequence belongs to the PanD family. As to quaternary structure, heterooctamer of four alpha and four beta subunits. The cofactor is pyruvate. In terms of processing, is synthesized initially as an inactive proenzyme, which is activated by self-cleavage at a specific serine bond to produce a beta-subunit with a hydroxyl group at its C-terminus and an alpha-subunit with a pyruvoyl group at its N-terminus.

It is found in the cytoplasm. It catalyses the reaction L-aspartate + H(+) = beta-alanine + CO2. Its pathway is cofactor biosynthesis; (R)-pantothenate biosynthesis; beta-alanine from L-aspartate: step 1/1. Catalyzes the pyruvoyl-dependent decarboxylation of aspartate to produce beta-alanine. The polypeptide is Aspartate 1-decarboxylase 1 (Frankia casuarinae (strain DSM 45818 / CECT 9043 / HFP020203 / CcI3)).